The following is a 433-amino-acid chain: 23S rRNA (uracil(1939)-C(5))-methyltransferase RlmD (433 aa).

The 59-residue stretch at 10–68 (RTTTRQIITVSVNDLDSFGQGVARHNGKTLFIPGLLPQENAEVAVTEDKKQYARAKVVR) folds into the TRAM domain. Residues C81, C87, C90, and C162 each coordinate [4Fe-4S] cluster. Residues Q265, F294, N299, E315, N342, and D363 each contribute to the S-adenosyl-L-methionine site. Catalysis depends on C389, which acts as the Nucleophile.

Belongs to the class I-like SAM-binding methyltransferase superfamily. RNA M5U methyltransferase family. RlmD subfamily.

The catalysed reaction is uridine(1939) in 23S rRNA + S-adenosyl-L-methionine = 5-methyluridine(1939) in 23S rRNA + S-adenosyl-L-homocysteine + H(+). In terms of biological role, catalyzes the formation of 5-methyl-uridine at position 1939 (m5U1939) in 23S rRNA. The chain is 23S rRNA (uracil(1939)-C(5))-methyltransferase RlmD from Shigella flexneri.